The primary structure comprises 307 residues: Ribonuclease Z (307 aa).

7 residues coordinate Zn(2+): His63, His65, Asp67, His68, His141, Asp212, and His270. The Proton acceptor role is filled by Asp67.

It belongs to the RNase Z family. Homodimer. Zn(2+) is required as a cofactor.

It carries out the reaction Endonucleolytic cleavage of RNA, removing extra 3' nucleotides from tRNA precursor, generating 3' termini of tRNAs. A 3'-hydroxy group is left at the tRNA terminus and a 5'-phosphoryl group is left at the trailer molecule.. Functionally, zinc phosphodiesterase, which displays some tRNA 3'-processing endonuclease activity. Probably involved in tRNA maturation, by removing a 3'-trailer from precursor tRNA. The chain is Ribonuclease Z from Bacillus mycoides (strain KBAB4) (Bacillus weihenstephanensis).